We begin with the raw amino-acid sequence, 201 residues long: MDKFTTLEGVAAPLKIINVDTDMIIPKQFLKTIKRTGLGKGLFSEQRYKDDGSENPDFILNKPAYRNAKILVAGDNFGCGSSREHAPWALLDFGIRCVISTSFGDIFYNNCFKNGVLPIRVTQADLDKLFDDAERGANATITIDLGKQEIRGPDGGTVKFDIDPFRKHCLMNGLDDIGLTLEKKASIDSYEDKAKTERAWA.

The protein belongs to the LeuD family. LeuD type 1 subfamily. In terms of assembly, heterodimer of LeuC and LeuD.

It catalyses the reaction (2R,3S)-3-isopropylmalate = (2S)-2-isopropylmalate. Its pathway is amino-acid biosynthesis; L-leucine biosynthesis; L-leucine from 3-methyl-2-oxobutanoate: step 2/4. Catalyzes the isomerization between 2-isopropylmalate and 3-isopropylmalate, via the formation of 2-isopropylmaleate. This is 3-isopropylmalate dehydratase small subunit from Rhodopseudomonas palustris (strain BisB18).